A 225-amino-acid chain; its full sequence is tRNA (guanine-N(7)-)-methyltransferase (225 aa).

S-adenosyl-L-methionine-binding residues include glutamate 56, glutamate 81, aspartate 108, and aspartate 131. Residue aspartate 131 is part of the active site. Substrate-binding positions include lysine 135, aspartate 167, and 204–207; that span reads TKFE.

It belongs to the class I-like SAM-binding methyltransferase superfamily. TrmB family.

It catalyses the reaction guanosine(46) in tRNA + S-adenosyl-L-methionine = N(7)-methylguanosine(46) in tRNA + S-adenosyl-L-homocysteine. It functions in the pathway tRNA modification; N(7)-methylguanine-tRNA biosynthesis. Its function is as follows. Catalyzes the formation of N(7)-methylguanine at position 46 (m7G46) in tRNA. This Legionella pneumophila (strain Corby) protein is tRNA (guanine-N(7)-)-methyltransferase.